Here is a 777-residue protein sequence, read N- to C-terminus: Ral guanine nucleotide dissociation stimulator-like 2 (777 aa).

The disordered stretch occupies residues 1–54 (MLPRPLRLLLDTSPPGGVVLSSFRSRDPEEGGGPGGLVVGGGQEEEEEEEEEAP). Residue serine 13 is modified to Phosphoserine. The span at 31 to 42 (GGGPGGLVVGGG) shows a compositional bias: gly residues. Over residues 43-54 (QEEEEEEEEEAP) the composition is skewed to acidic residues. The 125-residue stretch at 88 to 212 (SSRRLRAGTL…GSADLIRNLR (125 aa)) folds into the N-terminal Ras-GEF domain. Residues 243-513 (LADHLAEQLT…HRVSCEVEPP (271 aa)) enclose the Ras-GEF domain. Residue serine 409 is modified to Phosphoserine. Composition is skewed to low complexity over residues 581-610 (SLDS…SPRP) and 618-632 (ASCG…EEAS). 2 disordered regions span residues 581–644 (SLDS…GSGP) and 734–766 (RRSS…PRIK). The segment covering 633 to 644 (GGTGYGGEGSGP) has biased composition (gly residues). Residues 648 to 735 (DCRIIRVQME…HDFLLRQRRR (88 aa)) enclose the Ras-associating domain. Residues 740 to 755 (TPGVTSGPSASGTPPS) are compositionally biased toward low complexity.

As to quaternary structure, interacts with SAMD9.

Probable guanine nucleotide exchange factor. Putative effector of Ras and/or Rap. Associates with the GTP-bound form of Rap 1A and H-Ras in vitro. This is Ral guanine nucleotide dissociation stimulator-like 2 (RGL2) from Homo sapiens (Human).